The following is a 118-amino-acid chain: Small ribosomal subunit protein uS10 (118 aa).

Residue Ser37 is modified to Phosphoserine.

It belongs to the universal ribosomal protein uS10 family. As to quaternary structure, component of the small ribosomal subunit (SSU). Mature yeast ribosomes consist of a small (40S) and a large (60S) subunit. The 40S small subunit contains 1 molecule of ribosomal RNA (18S rRNA) and at least 33 different proteins. The large 60S subunit contains 3 rRNA molecules (25S, 5.8S and 5S rRNA) and at least 46 different proteins.

The protein localises to the cytoplasm. In terms of biological role, component of the ribosome, a large ribonucleoprotein complex responsible for the synthesis of proteins in the cell. The small ribosomal subunit (SSU) binds messenger RNAs (mRNAs) and translates the encoded message by selecting cognate aminoacyl-transfer RNA (tRNA) molecules. The large subunit (LSU) contains the ribosomal catalytic site termed the peptidyl transferase center (PTC), which catalyzes the formation of peptide bonds, thereby polymerizing the amino acids delivered by tRNAs into a polypeptide chain. The nascent polypeptides leave the ribosome through a tunnel in the LSU and interact with protein factors that function in enzymatic processing, targeting, and the membrane insertion of nascent chains at the exit of the ribosomal tunnel. In Schizosaccharomyces pombe (strain 972 / ATCC 24843) (Fission yeast), this protein is Small ribosomal subunit protein uS10 (rps20).